Reading from the N-terminus, the 414-residue chain is Transmembrane protein 184A (414 aa).

The disordered stretch occupies residues 1-32 (MTDTPGLLGTPLAWTPPARPAGPQMERAGNGS). 7 consecutive transmembrane segments (helical) span residues 48-68 (VSGV…YLHL), 83-103 (LLFI…LLGG), 120-140 (FVIY…SAIM), 177-197 (LQFC…QAFG), 211-231 (LYIT…LFLF), 248-268 (FLTI…LAIL), and 290-310 (VAAG…SIAL). Disordered stretches follow at residues 323 to 342 (TESS…GLKE) and 364 to 414 (YTQQ…AEEL). Residues 379 to 388 (SVPSPRTPTH) are compositionally biased toward polar residues.

This sequence belongs to the TMEM184 family. In terms of tissue distribution, expressed in vascular cells (at protein level).

It localises to the cell membrane. The protein resides in the cytoplasm. Its subcellular location is the perinuclear region. The protein localises to the cytoplasmic vesicle membrane. It is found in the early endosome membrane. It localises to the endosome. The protein resides in the cytoplasmic vesicle. Its subcellular location is the secretory vesicle membrane. Its function is as follows. Acts as a heparin receptor in vascular cells. May be involved in vesicle transport in exocrine cells and Sertoli cells. This Bos taurus (Bovine) protein is Transmembrane protein 184A (TMEM184A).